The primary structure comprises 150 residues: L-alanine exporter AlaE (150 aa).

4 consecutive transmembrane segments (helical) span residues 17–37, 48–68, 86–106, and 111–131; these read FAMV…VSGM, LSIP…DYVL, LVAY…TVGA, and IITA…LYGY.

Belongs to the AlaE exporter family.

The protein resides in the cell inner membrane. Its function is as follows. Exports L-alanine. The protein is L-alanine exporter AlaE of Vibrio cholerae serotype O1 (strain ATCC 39315 / El Tor Inaba N16961).